The chain runs to 363 residues: Chorismate synthase (363 aa).

NADP(+)-binding residues include arginine 48 and arginine 54. FMN contacts are provided by residues 125–127 (RSS), 237–238 (NA), glycine 277, 292–296 (KPTSS), and arginine 318.

The protein belongs to the chorismate synthase family. Homotetramer. FMNH2 serves as cofactor.

It catalyses the reaction 5-O-(1-carboxyvinyl)-3-phosphoshikimate = chorismate + phosphate. The protein operates within metabolic intermediate biosynthesis; chorismate biosynthesis; chorismate from D-erythrose 4-phosphate and phosphoenolpyruvate: step 7/7. Catalyzes the anti-1,4-elimination of the C-3 phosphate and the C-6 proR hydrogen from 5-enolpyruvylshikimate-3-phosphate (EPSP) to yield chorismate, which is the branch point compound that serves as the starting substrate for the three terminal pathways of aromatic amino acid biosynthesis. This reaction introduces a second double bond into the aromatic ring system. This chain is Chorismate synthase, found in Pseudomonas putida (strain GB-1).